A 265-amino-acid polypeptide reads, in one-letter code: 5'-nucleotidase SurE (265 aa).

D8, D9, S41, and N100 together coordinate a divalent metal cation.

It belongs to the SurE nucleotidase family. The cofactor is a divalent metal cation.

Its subcellular location is the cytoplasm. It carries out the reaction a ribonucleoside 5'-phosphate + H2O = a ribonucleoside + phosphate. In terms of biological role, nucleotidase that shows phosphatase activity on nucleoside 5'-monophosphates. The sequence is that of 5'-nucleotidase SurE from Brevibacillus brevis (strain 47 / JCM 6285 / NBRC 100599).